A 672-amino-acid polypeptide reads, in one-letter code: MRSIRSFANDDRHVMVKHSTIYPSPEELEAVQNMVSTVECALKHVSDWLDETNKGTKPEGETEVKKDEAVENYSKDQGGRTLCGVMRIGLVAKGLLIKDDMDLELVLMCKDKPTETLLNTVKDNLPIQIQKLTEEKYQVEQCINEASIIIRNTKEPTLTLKVILTSPLIRDELEKKDGENVMMKDPPDLLDRQKCLNALASLRHAKWFQARANGLKSCVIVLRILRDLCNRVPTWAPLKGWPLELICEKSIGTCNRPLGAGEALRRVMECLASGILLPGGPGLHDPCERDPTDALSYMTTQQKEDITHSAQHALRLSAFGQIYKVLEMDPLPSSKPFQKYSWSVTDKEGAGSSALKRPFEDGLGDDKDPNKKMKRNLRKILDSKAIDLMNALMRLNQIRPGLQYKLLSQSGPVHAPVFTMSVDVDGTTYEASGPSKKTAKLHVAVKVLQAMGYPTGFDADIECISSDEKSDNESKNDTVSSNSSNNTGNSTTETSSTLEVRTQGPILTASGKNPVMELNEKRRGLKYELISETGGSHDKRFVMEVEVDGQKFRGAGPNKKVAKASAALAALEKLFSGPNAANNKKKKIIPQAKGVVNTAVSAAVQAVRGRGRGTLTRGAFVGATAAPGYIAPGYGTPYGYSTAAPAYGLPKRMVLLPVMKFPTYPVPHYSFF.

The 359-residue stretch at 5–363 (RSFANDDRHV…ALKRPFEDGL (359 aa)) folds into the DZF domain. The disordered stretch occupies residues 349-371 (GAGSSALKRPFEDGLGDDKDPNK). A compositionally biased stretch (basic and acidic residues) spans 357–371 (RPFEDGLGDDKDPNK). One can recognise a DRBM 1 domain in the interval 387 to 453 (DLMNALMRLN…AVKVLQAMGY (67 aa)). Residues 467–476 (DEKSDNESKN) are compositionally biased toward basic and acidic residues. The disordered stretch occupies residues 467–514 (DEKSDNESKNDTVSSNSSNNTGNSTTETSSTLEVRTQGPILTASGKNP). The segment covering 477–497 (DTVSSNSSNNTGNSTTETSST) has biased composition (low complexity). In terms of domain architecture, DRBM 2 spans 510–576 (SGKNPVMELN…ALAALEKLFS (67 aa)). Asymmetric dimethylarginine is present on residues arginine 612 and arginine 617.

As to quaternary structure, interacts with EIF2AK2. Associates with microtubules; it is unsure whether such interaction is direct or indirect. In terms of tissue distribution, isoform 2 is expressed in spermatocytes (at protein level). Expressed in testis, thymus, ovary, liver, kidney, heart, spleen and brain. Expressed in cortex, dentate gyrus and Purkinje cell layer and granule cells of the cerebellum.

Its subcellular location is the cytoplasm. It is found in the cytoskeleton. Its function is as follows. Involved in spermatogenesis and sperm function. Plays a role in regulation of cell growth. Binds to double-stranded DNA and RNA. Binds most efficiently to poly(I:C) RNA than to poly(dI:dC) DNA. Also binds to single-stranded poly(G) RNA. Binds non-specifically to the mRNA PRM1 3'-UTR and adenovirus VA RNA. The sequence is that of Spermatid perinuclear RNA-binding protein (Strbp) from Mus musculus (Mouse).